The primary structure comprises 122 residues: UPF0102 protein cgR_1859 (122 aa).

The protein belongs to the UPF0102 family.

This is UPF0102 protein cgR_1859 from Corynebacterium glutamicum (strain R).